We begin with the raw amino-acid sequence, 797 residues long: MKQEQQPTPGARATQSQPADQELGSNSPPQRNWKGIAIALLVILVVCSLITMSVILLTPDELTNSSETRLSLEELLGKGFGLHNPEPRWINDTVVVYKTNNGHVMKLNTESNASTLLLDNSTFVTFKASRHSLSPDLKYVLLAYDVKQIFHYSFTASYLIYNIHTGEVWELNPPEVEDSVLQYAAWGVQGQQLIYIFENNIYYQPDIKSSSLRLTSSGKEGIIFNGIADWLYEEELLHSHIAHWWSPDGERLAFLMINDSLVPNMIIPRFTGALYPKAKQYPYPKAGQANPSVKLYVVNLYGPTHTLELMPPDIFKSREYYITMVKWVSNTRTVVRWLNRPQNISILTLCESTTGACSRKYEMTSDTWLSKQNEEPVFSRDGSKFFMTVPVKQGGRGEFHHIAMFLVQSKSEQITVRHLTSGNWEVIRILAYDETTQKIYFLSTESSPQGRQLYSASTEGLLNRDCISCNFMKEDCTYFDASFSPMNQHFLLFCEGPKVPVVSLHITDNPSRYFLLENNSVMKETIQKKKLAKRETRILHIDDYELPLQLSFPKDFMEKNQYALLLIMDEEPGGQMVTDKFHVDWDSVLIDTDNVIVARFDGRGSGFQGLKVLQEIHRRIGSVEAKDQVAAVKYLLKQPYIDSKRLSIFGKGYGGYIASMILKSDEKFFKCGAVVAPISDMKLYASAFSERYLGMPSKEESTYQASSVLHNIHGLKEENLLIIHGTADTKVHFQHSAELIKHLIKAGVNYTLQVYPDEGYHISDKSKHHFYSTILRFFSDCLKEEVSVLPQEPEEDE.

Positions 1 to 28 (MKQEQQPTPGARATQSQPADQELGSNSP) are disordered. Residues 1 to 34 (MKQEQQPTPGARATQSQPADQELGSNSPPQRNWK) are Cytoplasmic-facing. Residues 35–55 (GIAIALLVILVVCSLITMSVI) traverse the membrane as a helical; Signal-anchor for type II membrane protein segment. Topologically, residues 56–797 (LLTPDELTNS…VLPQEPEEDE (742 aa)) are extracellular. N-linked (GlcNAc...) asparagine glycosylation is found at N64, N91, N112, and N120. A phosphotyrosine mark is found at Y139 and Y144. N258, N343, N518, and N749 each carry an N-linked (GlcNAc...) asparagine glycan.

This sequence belongs to the peptidase S9B family. DPPIV subfamily. In terms of assembly, may form oligomers. Interacts with KCND1 and KCND2. Post-translationally, N-glycosylation is important for cell surface expression, specially at Asn-258, which is crucial. As to expression, detected in brain cortex (at protein level). Expressed in the brain, predominantly by neurons and not by glia.

The protein localises to the cell membrane. Its function is as follows. Promotes cell surface expression of the potassium channel KCND2. Modulates the activity and gating characteristics of the potassium channel KCND2. Has no dipeptidyl aminopeptidase activity. This is Inactive dipeptidyl peptidase 10 (Dpp10) from Mus musculus (Mouse).